The sequence spans 460 residues: Telomere-binding protein homolog (460 aa).

Belongs to the telombin family.

It localises to the nucleus. It is found in the chromosome. Its subcellular location is the telomere. Functionally, may bind telomeric T4G4 sequences. This chain is Telomere-binding protein homolog, found in Euplotes crassus.